The following is a 479-amino-acid chain: Protein kinase 2 (479 aa).

Positions 1–136 are disordered; sequence MGKGQSKIKN…NGNDDEDEGP (136 aa). Composition is skewed to low complexity over residues 52 to 65 and 79 to 96; these read AQQQ…TTAA and IPAP…TPTI. The span at 102-115 shows a compositional bias: polar residues; that stretch reads NTDNNNINGASNEA. Positions 153 to 407 constitute a Protein kinase domain; that stretch reads FELLNVIGKG…GGEVKQHPWF (255 aa). ATP contacts are provided by residues 159-167 and Lys182; that span reads IGKGSFGKV. The active-site Proton acceptor is the Asp276. Thr309 carries the post-translational modification Phosphothreonine; by autocatalysis. In terms of domain architecture, AGC-kinase C-terminal spans 408 to 479; the sequence is KNIDWEKLDR…TYVADSILKD (72 aa). Thr470 bears the Phosphothreonine mark.

The protein belongs to the protein kinase superfamily. AGC Ser/Thr protein kinase family. S6 kinase subfamily. Post-translationally, seems to be myristoylated.

The protein localises to the cytoplasm. It is found in the cell membrane. It carries out the reaction L-seryl-[protein] + ATP = O-phospho-L-seryl-[protein] + ADP + H(+). The enzyme catalyses L-threonyl-[protein] + ATP = O-phospho-L-threonyl-[protein] + ADP + H(+). Its function is as follows. Required for morphogenesis during multicellular development. Phosphorylates talB, gefN, gefS, PI4P 5-kinase and gacQ. The protein is Protein kinase 2 (pkgB) of Dictyostelium discoideum (Social amoeba).